The primary structure comprises 360 residues: Venom serine protease Bi-VSP (360 aa).

An N-terminal signal peptide occupies residues 1–26 (MTGSKMLFACLALIAFLHPLVHVASA). The propeptide occupies 27–113 (QECTTPNNKA…CGFSNVSHTR (87 aa)). Residues 28-79 (ECTTPNNKAGKCLGIRVCKPLLEMLQTQGHAAADFLRQSVCKYENNNPIVCC) form the Clip domain. 7 cysteine pairs are disulfide-bonded: Cys-29-Cys-78, Cys-39-Cys-68, Cys-45-Cys-79, Cys-104-Cys-230, Cys-147-Cys-163, Cys-278-Cys-296, and Cys-307-Cys-335. The N-linked (GlcNAc...) asparagine glycan is linked to Asn-108. A Peptidase S1 domain is found at 114–360 (VVGGKPAVLG…LDDFILPAMQ (247 aa)). His-162 serves as the catalytic Charge relay system. Residues Asp-176, Asn-178, Arg-181, and Asp-184 each coordinate Ca(2+). Asp-210 functions as the Charge relay system in the catalytic mechanism. The active-site Charge relay system is the Ser-311.

It belongs to the peptidase S1 family. CLIP subfamily. Expressed by the venom gland.

The protein localises to the secreted. Functionally, multifunctional venom serine protease. In insects, it acts as an arthropod prophenoloxidase-activating factor, thereby triggering the phenoloxidase cascade. When injected into larvae, it induces a lethal melanization response in target insects by modulating the innate immune response. In mammals, it converts fibrinogen into fibrin, activates prothrombin, and also degrades fibrin. In mammal, it may act in a cooperative manner with the serine protease inhibitor Bi-KTI (AC G3LH89) to promote the spread of bee venom under anti-bleeding conditions. This is Venom serine protease Bi-VSP from Bombus ignitus (Bumblebee).